We begin with the raw amino-acid sequence, 883 residues long: Phosphoenolpyruvate carboxylase (883 aa).

Active-site residues include H141 and K547.

Belongs to the PEPCase type 1 family. It depends on Mg(2+) as a cofactor.

The enzyme catalyses oxaloacetate + phosphate = phosphoenolpyruvate + hydrogencarbonate. In terms of biological role, forms oxaloacetate, a four-carbon dicarboxylic acid source for the tricarboxylic acid cycle. In Chromohalobacter salexigens (strain ATCC BAA-138 / DSM 3043 / CIP 106854 / NCIMB 13768 / 1H11), this protein is Phosphoenolpyruvate carboxylase.